A 172-amino-acid chain; its full sequence is Shikimate kinase (172 aa).

Gly14 to Thr19 is an ATP binding site. Residue Ser18 coordinates Mg(2+). Substrate is bound by residues Asp36, Arg60, and Gly82. Residue Arg120 participates in ATP binding. Arg139 contacts substrate. An ATP-binding site is contributed by Gln156.

This sequence belongs to the shikimate kinase family. In terms of assembly, monomer. It depends on Mg(2+) as a cofactor.

It localises to the cytoplasm. The catalysed reaction is shikimate + ATP = 3-phosphoshikimate + ADP + H(+). It functions in the pathway metabolic intermediate biosynthesis; chorismate biosynthesis; chorismate from D-erythrose 4-phosphate and phosphoenolpyruvate: step 5/7. Catalyzes the specific phosphorylation of the 3-hydroxyl group of shikimic acid using ATP as a cosubstrate. The sequence is that of Shikimate kinase from Aliivibrio salmonicida (strain LFI1238) (Vibrio salmonicida (strain LFI1238)).